Consider the following 350-residue polypeptide: Derriere protein (350 aa).

Positions 1 to 16 are cleaved as a signal peptide; the sequence is MLSLACFFSFLLMVKS. Positions 17 to 236 are excised as a propeptide; sequence SPLTFQERML…SSCKTPRAKR (220 aa). N-linked (GlcNAc...) asparagine glycosylation is found at N171 and N202. 3 disulfide bridges follow: C249/C315, C278/C347, and C282/C349.

It belongs to the TGF-beta family. As to quaternary structure, homodimer; disulfide-linked. Also forms heterodimers with other TGF-beta family members including nodal2/nr-2 and bmp4.

It localises to the secreted. Required for posterior mesoderm formation during embryogenesis. Acts indirectly to suppress head formation by altering mesodermal patterning. Also involved in the establishment of left-right axis asymmetry, acting upstream of nodal/nr-1. Can exert long-range effects in the embryo. In Xenopus tropicalis (Western clawed frog), this protein is Derriere protein.